Here is a 160-residue protein sequence, read N- to C-terminus: Cyanate hydratase (160 aa).

Active-site residues include R100, E103, and S126.

This sequence belongs to the cyanase family.

The enzyme catalyses cyanate + hydrogencarbonate + 3 H(+) = NH4(+) + 2 CO2. Its function is as follows. Catalyzes the reaction of cyanate with bicarbonate to produce ammonia and carbon dioxide. This chain is Cyanate hydratase, found in Emericella nidulans (strain FGSC A4 / ATCC 38163 / CBS 112.46 / NRRL 194 / M139) (Aspergillus nidulans).